Here is a 103-residue protein sequence, read N- to C-terminus: UPF0145 protein EF_0241 (103 aa).

It belongs to the UPF0145 family.

This is UPF0145 protein EF_0241 from Enterococcus faecalis (strain ATCC 700802 / V583).